The chain runs to 399 residues: Dual-specificity RNA methyltransferase RlmN (399 aa).

The active-site Proton acceptor is E122. In terms of domain architecture, Radical SAM core spans E128 to L371. A disulfide bridge connects residues C135 and C374. C142, C146, and C149 together coordinate [4Fe-4S] cluster. S-adenosyl-L-methionine-binding positions include G200 to E201, S232, S254 to H256, and N331. The active-site S-methylcysteine intermediate is the C374.

Belongs to the radical SAM superfamily. RlmN family. [4Fe-4S] cluster is required as a cofactor.

It localises to the cytoplasm. The catalysed reaction is adenosine(2503) in 23S rRNA + 2 reduced [2Fe-2S]-[ferredoxin] + 2 S-adenosyl-L-methionine = 2-methyladenosine(2503) in 23S rRNA + 5'-deoxyadenosine + L-methionine + 2 oxidized [2Fe-2S]-[ferredoxin] + S-adenosyl-L-homocysteine. It catalyses the reaction adenosine(37) in tRNA + 2 reduced [2Fe-2S]-[ferredoxin] + 2 S-adenosyl-L-methionine = 2-methyladenosine(37) in tRNA + 5'-deoxyadenosine + L-methionine + 2 oxidized [2Fe-2S]-[ferredoxin] + S-adenosyl-L-homocysteine. Its function is as follows. Specifically methylates position 2 of adenine 2503 in 23S rRNA and position 2 of adenine 37 in tRNAs. m2A2503 modification seems to play a crucial role in the proofreading step occurring at the peptidyl transferase center and thus would serve to optimize ribosomal fidelity. The sequence is that of Dual-specificity RNA methyltransferase RlmN from Rhodopseudomonas palustris (strain BisB18).